We begin with the raw amino-acid sequence, 492 residues long: Steroid 21-hydroxylase (492 aa).

2 residues coordinate heme b: R91 and K120. Residue R231 participates in 17alpha-hydroxyprogesterone binding. Progesterone is bound at residue R231. Residues H363, R424, and C426 each contribute to the heme b site.

The protein belongs to the cytochrome P450 family. Heme b serves as cofactor.

The protein resides in the endoplasmic reticulum membrane. It localises to the microsome membrane. It catalyses the reaction 17alpha-hydroxyprogesterone + reduced [NADPH--hemoprotein reductase] + O2 = 11-deoxycortisol + oxidized [NADPH--hemoprotein reductase] + H2O + H(+). The catalysed reaction is progesterone + reduced [NADPH--hemoprotein reductase] + O2 = 21-hydroxyprogesterone + oxidized [NADPH--hemoprotein reductase] + H2O + H(+). Functionally, specifically catalyzes the 21-hydroxylation of steroids. Required for the adrenal synthesis of mineralocorticoids and glucocorticoids. This is Steroid 21-hydroxylase (CYP21) from Felis catus (Cat).